We begin with the raw amino-acid sequence, 395 residues long: Small RNA 2'-O-methyltransferase (395 aa).

S-adenosyl-L-methionine contacts are provided by aspartate 79 and serine 115. Mg(2+) contacts are provided by glutamate 133, glutamate 136, histidine 137, and histidine 182.

Belongs to the methyltransferase superfamily. HEN1 family. It depends on Mg(2+) as a cofactor. As to expression, specifically expressed in testis.

The protein localises to the cytoplasm. The enzyme catalyses small RNA 3'-end nucleotide + S-adenosyl-L-methionine = small RNA 3'-end 2'-O-methylnucleotide + S-adenosyl-L-homocysteine + H(+). Its function is as follows. Methyltransferase that adds a 2'-O-methyl group at the 3'-end of piRNAs, a class of 24 to 30 nucleotide RNAs that are generated by a Dicer-independent mechanism and are primarily derived from transposons and other repeated sequence elements. This probably protects the 3'-end of piRNAs from uridylation activity and subsequent degradation. Stabilization of piRNAs is essential for gametogenesis. This is Small RNA 2'-O-methyltransferase (Henmt1) from Mus musculus (Mouse).